A 102-amino-acid chain; its full sequence is NADH-quinone oxidoreductase subunit K (102 aa).

3 helical membrane passes run 3–23, 31–51, and 66–86; these read IGLT…AFGI, IVLL…LVAF, and FILT…VVYF.

Belongs to the complex I subunit 4L family. As to quaternary structure, NDH-1 is composed of 14 different subunits. Subunits NuoA, H, J, K, L, M, N constitute the membrane sector of the complex.

The protein resides in the cell inner membrane. The enzyme catalyses a quinone + NADH + 5 H(+)(in) = a quinol + NAD(+) + 4 H(+)(out). Functionally, NDH-1 shuttles electrons from NADH, via FMN and iron-sulfur (Fe-S) centers, to quinones in the respiratory chain. The immediate electron acceptor for the enzyme in this species is believed to be ubiquinone. Couples the redox reaction to proton translocation (for every two electrons transferred, four hydrogen ions are translocated across the cytoplasmic membrane), and thus conserves the redox energy in a proton gradient. The protein is NADH-quinone oxidoreductase subunit K of Rhodospirillum centenum (strain ATCC 51521 / SW).